The sequence spans 32 residues: Parigidin-br1 (32 aa).

The cyclopeptide (Gly-Asp) cross-link spans Gly1–Asp32. Disulfide bonds link Cys6–Cys22, Cys10–Cys24, and Cys15–Cys29.

In terms of processing, this is a cyclic peptide. As to expression, expressed in leaves, flowers, peduncles and seeds (at protein level).

Functionally, probably participates in a plant defense mechanism. Reduces growth of and increases mortality in larvae of D.saccharalis. Kills cultured SF-9 cells of S.frugiperda probably by disrupting plasma membranes. Has hemolytic activity against human erythrocytes. Has no antibacterial activity against E.coli strain ATCC 8739 and S.aureus strain ATCC 25923. The polypeptide is Parigidin-br1 (Palicourea rigida).